We begin with the raw amino-acid sequence, 464 residues long: Divalent metal cation transporter MntH (464 aa).

11 helical membrane passes run 57 to 77 (ILIA…AGGA), 82 to 102 (SLLS…SMAA), 125 to 145 (GIIL…AEII), 157 to 177 (IPLV…LLLM), 186 to 206 (AIVA…VFLA), 229 to 249 (MLYL…LYLG), 281 to 301 (LTIA…LFFG), 321 to 341 (IVGA…LLSS), 376 to 396 (LLSV…EAKI), 399 to 419 (LLTL…VPLV), and 443 to 463 (VATV…VGVI).

Belongs to the NRAMP family.

The protein localises to the cell membrane. Its function is as follows. H(+)-stimulated, divalent metal cation uptake system. The protein is Divalent metal cation transporter MntH of Levilactobacillus brevis (Lactobacillus brevis).